The sequence spans 80 residues: Raniseptin-1 (80 aa).

The first 22 residues, 1–22 (MAFLKKSLFLVLFLGIVSLSIC), serve as a signal peptide directing secretion. The propeptide occupies 23-49 (EEEKREGEEEEKQEEENEELSEEELRE).

The protein belongs to the frog skin active peptide (FSAP) family. Dermaseptin subfamily. As to expression, expressed by the skin glands.

The protein resides in the secreted. In terms of biological role, has antibacterial activity against the Gram-negative bacteria E.coli ATCC 25922 (MIC=5 uM), P.aeruginosa ATCC 27853 (MIC=10 uM) and X.citri (MIC&lt; 2 uM), and the Gram-positive bacterium S.aureus ATCC 29313 (MIC=20 uM). Does not have hemolytic activity against human erythrocytes. This chain is Raniseptin-1, found in Boana raniceps (Chaco tree frog).